Consider the following 160-residue polypeptide: Ribosomal RNA large subunit methyltransferase H (160 aa).

S-adenosyl-L-methionine contacts are provided by residues leucine 76, glycine 108, and 127–132; that span reads LGKMTW.

This sequence belongs to the RNA methyltransferase RlmH family. As to quaternary structure, homodimer.

The protein localises to the cytoplasm. It carries out the reaction pseudouridine(1915) in 23S rRNA + S-adenosyl-L-methionine = N(3)-methylpseudouridine(1915) in 23S rRNA + S-adenosyl-L-homocysteine + H(+). Its function is as follows. Specifically methylates the pseudouridine at position 1915 (m3Psi1915) in 23S rRNA. The sequence is that of Ribosomal RNA large subunit methyltransferase H from Rhizobium etli (strain ATCC 51251 / DSM 11541 / JCM 21823 / NBRC 15573 / CFN 42).